A 179-amino-acid chain; its full sequence is Large ribosomal subunit protein uL5 (179 aa).

It belongs to the universal ribosomal protein uL5 family. Part of the 50S ribosomal subunit; part of the 5S rRNA/L5/L18/L25 subcomplex. Contacts the 5S rRNA and the P site tRNA. Forms a bridge to the 30S subunit in the 70S ribosome.

Its function is as follows. This is one of the proteins that bind and probably mediate the attachment of the 5S RNA into the large ribosomal subunit, where it forms part of the central protuberance. In the 70S ribosome it contacts protein S13 of the 30S subunit (bridge B1b), connecting the 2 subunits; this bridge is implicated in subunit movement. Contacts the P site tRNA; the 5S rRNA and some of its associated proteins might help stabilize positioning of ribosome-bound tRNAs. The polypeptide is Large ribosomal subunit protein uL5 (Pelobacter propionicus (strain DSM 2379 / NBRC 103807 / OttBd1)).